The following is a 1009-amino-acid chain: UvrABC system protein A (1009 aa).

32–39 is a binding site for ATP; the sequence is GLSGSGKS. ABC transporter domains follow at residues 314–592 and 612–941; these read WSHG…AESQ and RDPS…KFLR. 645 to 652 provides a ligand contact to ATP; the sequence is GVSGSGKS. A C4-type zinc finger spans residues 744–770; the sequence is CENCSGDGTIKIEMNFLPDVYVPCEVC. A disordered region spans residues 956 to 1009; the sequence is KAPRKTAARKTAAAKSTTKKTATVRTTNNTATKKAAAVTKKTAPAKKTTRARKA. Residues 964-997 are compositionally biased toward low complexity; that stretch reads RKTAAAKSTTKKTATVRTTNNTATKKAAAVTKKT. The span at 998–1009 shows a compositional bias: basic residues; the sequence is APAKKTTRARKA.

It belongs to the ABC transporter superfamily. UvrA family. In terms of assembly, forms a heterotetramer with UvrB during the search for lesions.

The protein localises to the cytoplasm. Functionally, the UvrABC repair system catalyzes the recognition and processing of DNA lesions. UvrA is an ATPase and a DNA-binding protein. A damage recognition complex composed of 2 UvrA and 2 UvrB subunits scans DNA for abnormalities. When the presence of a lesion has been verified by UvrB, the UvrA molecules dissociate. The polypeptide is UvrABC system protein A (Streptomyces avermitilis (strain ATCC 31267 / DSM 46492 / JCM 5070 / NBRC 14893 / NCIMB 12804 / NRRL 8165 / MA-4680)).